The primary structure comprises 55 residues: Lantibiotic epilancin 15X (55 aa).

Positions 1 to 24 (MKKELFDLNLNKDIEAQKSDLNPQ) are cleaved as a propeptide — cleaved by ElxP. The residue at position 25 (Ser25) is a D-lactate; by the dehydratase ElxB and the dehydrogenase ElxO. Ser27 is subject to 2,3-didehydroalanine (Ser); by the dehydratase ElxB. 2 positions are modified to 2,3-didehydrobutyrine; by the dehydratase ElxB: Thr31 and Thr32. Positions 36–40 (SKKLC) form a cross-link, lanthionine (Ser-Cys); by the dehydratase ElxB and the cyclase ElxC. 2 cross-links (beta-methyllanthionine (Thr-Cys); by the dehydratase ElxB and the cyclase ElxC) span residues 44–47 (TLTC) and 46–49 (TCGC). Thr52 is modified (2,3-didehydrobutyrine; by the dehydratase ElxB).

In terms of processing, maturation of this lantibiotic involves the enzymatic conversion of Thr, and Ser into dehydrated AA by ElxB and the formation of thioether bonds with cysteine by the cyclase ElxC. The next steps are cleavage of the leader peptide by ElxP and membrane translocation by ElxT. The leader peptide may be removed before membrane translocation, in contrast to other lantibiotics for which the cleavage occur after translocation. This is suggested by the probable cytoplasmic localization of the serine protease ElxP that cleaves the leader peptide. Post-translationally, the N-terminal D-lactate is probably produced by dehydration of Ser-25 by ElxB, followed by proteolytic removal of the leader peptide by the serine protease ElxP and hydrolysis of the resulting new N-terminal dehydroalanine. This hydrolysis may occur spontaneously. The pyruvate group thus formed is reduced to D-lactate by the NADPH-dependent oxidoreductase ElxO. This N-terminal D-lactate protects the lantibiotic against degradation against aminopeptidase. It is not established whether the 2,3-didehydrobutyrines are the E- or Z-isomers.

Its function is as follows. Lanthionine-containing peptide antibiotic (lantibiotic) active on Gram-positive bacteria such as staphylococci, enterococci and streptococci. The bactericidal activity of lantibiotics is based on depolarization of energized bacterial cytoplasmic membranes, initiated by the formation of aqueous transmembrane pores. The chain is Lantibiotic epilancin 15X from Staphylococcus epidermidis.